We begin with the raw amino-acid sequence, 373 residues long: MANKDYYEVLGLQKGASDDEIKKAFRKLAIKYHPDKNKGNTEAEEKFKEINEAYQVLSDPEKKSNYDQFGSADFNGGGFGSGGFGGFDMGGFGDIFDMFTGGGSSTRRRNGPVNGNDIEYTVTLTFEEAVFGVEKEITVNRSESCEHCNGSGAEPGTSKKTCPTCSGTGQVRVQRQTPLGSFVSTSTCDRCSGTGNIIEKPCTHCRGNGNVRKTRKINVNIPAGVDTGNVMPLRGQGEHGLRGGSPGDLYIRINVSPSKEFTRKGNDIYIDTHISMAKAALGTEITVKTVEGNVKYTVPEGTQSGTLFRLKGKGVARVNSTGKGDQYVRVIVDIPKGLNQKQKEALYTFMEACGEEMDENTHSFKKNLFGRKK.

A J domain is found at 5–70 (DYYEVLGLQK…EKKSNYDQFG (66 aa)). The segment at 132–214 (GVEKEITVNR…CRGNGNVRKT (83 aa)) adopts a CR-type zinc-finger fold. Positions 145, 148, 162, 165, 188, 191, 202, and 205 each coordinate Zn(2+). CXXCXGXG motif repeat units follow at residues 145–152 (CEHCNGSG), 162–169 (CPTCSGTG), 188–195 (CDRCSGTG), and 202–209 (CTHCRGNG).

It belongs to the DnaJ family. Homodimer. Requires Zn(2+) as cofactor.

Its subcellular location is the cytoplasm. In terms of biological role, participates actively in the response to hyperosmotic and heat shock by preventing the aggregation of stress-denatured proteins and by disaggregating proteins, also in an autonomous, DnaK-independent fashion. Unfolded proteins bind initially to DnaJ; upon interaction with the DnaJ-bound protein, DnaK hydrolyzes its bound ATP, resulting in the formation of a stable complex. GrpE releases ADP from DnaK; ATP binding to DnaK triggers the release of the substrate protein, thus completing the reaction cycle. Several rounds of ATP-dependent interactions between DnaJ, DnaK and GrpE are required for fully efficient folding. Also involved, together with DnaK and GrpE, in the DNA replication of plasmids through activation of initiation proteins. This Clostridium botulinum (strain Eklund 17B / Type B) protein is Chaperone protein DnaJ.